Here is a 276-residue protein sequence, read N- to C-terminus: Large ribosomal subunit protein uL2 (276 aa).

Disordered regions lie at residues 33-55 and 221-276; these read LVEAQGRSGGRNNNGRITSRHIG and RGTA…AKKK.

The protein belongs to the universal ribosomal protein uL2 family. Part of the 50S ribosomal subunit. Forms a bridge to the 30S subunit in the 70S ribosome.

One of the primary rRNA binding proteins. Required for association of the 30S and 50S subunits to form the 70S ribosome, for tRNA binding and peptide bond formation. It has been suggested to have peptidyltransferase activity; this is somewhat controversial. Makes several contacts with the 16S rRNA in the 70S ribosome. In Psychrobacter sp. (strain PRwf-1), this protein is Large ribosomal subunit protein uL2.